The sequence spans 188 residues: Putative manganese efflux pump MntP (188 aa).

The next 6 helical transmembrane spans lie at 3–23, 35–55, 70–90, 104–126, 140–160, and 167–187; these read LYAL…VALA, IAAT…AGWV, WAAF…GLSG, WLTV…GLAF, MATT…GVLF, and AGGL…LGLI.

The protein belongs to the MntP (TC 9.B.29) family.

Its subcellular location is the cell inner membrane. In terms of biological role, probably functions as a manganese efflux pump. The protein is Putative manganese efflux pump MntP of Neisseria meningitidis serogroup C / serotype 2a (strain ATCC 700532 / DSM 15464 / FAM18).